The chain runs to 522 residues: Insulinoma-associated protein 1 (522 aa).

Over residues 1–12 (MPRGFLVKRSKK) the composition is skewed to basic residues. Residues 1–20 (MPRGFLVKRSKKSTPVSYRI) form an SNAG domain region. Disordered stretches follow at residues 1–112 (MPRG…SREH) and 182–235 (AAEA…KPKA). The interval 2–7 (PRGFLV) is required and sufficient for interaction with KDM1A. Residues 43–57 (PPAPGPGPVPGPLQP) form a necessary for interaction with CCND1 region. Over residues 43-61 (PPAPGPGPVPGPLQPPPPT) the composition is skewed to pro residues. Composition is skewed to low complexity over residues 66-75 (AALAAALACA) and 212-228 (ASAA…AKAP). The C2H2-type 1; atypical zinc-finger motif lies at 277–297 (FICQLCKEEYADPFALAQHKC). The C2H2-type 2 zinc finger occupies 305–327 (YRCPECAKVFSCPANLASHRRWH). The tract at residues 325-373 (RWHKPRPAPAAARACEPETPARAEAREATGGGGSDRDTPSPGGVSESGS) is disordered. The segment covering 339–351 (CEPETPARAEARE) has biased composition (basic and acidic residues). 3 consecutive C2H2-type zinc fingers follow at residues 378–400 (YECH…LLAH), 453–476 (HLCP…RLLH), and 481–504 (FPCK…NKCH).

The protein belongs to the INSM1 family. In terms of assembly, interacts (via the N-terminal region) with CCND1 (via cyclin N-terminal domain); the interaction competes with the binding of CCND1 to CDK4 during cell cycle progression and increases its transcriptional repressor activity. Interacts with HDAC3; the interaction increases its transcriptional repressor activity. Interacts (via the SNAG domain) with HDAC1. Interacts (via the SNAG domain) with HDAC2. Interacts (via the SNAG domain) with KDM1A. Interacts (via the SNAG domain) with RCOR1. Interacts with SORBS1.

The protein localises to the nucleus. Its function is as follows. Sequence-specific DNA-binding transcriptional regulator that plays a key role in neurogenesis and neuroendocrine cell differentiation during embryonic and/or fetal development. Binds to the consensus sequence 5'-[TG][TC][TC][TT][GA]GGG[CG]A-3' in target promoters. Acts as a transcriptional repressor of NEUROD1 and INS expression via its interaction with cyclin CCND1 in a cell cycle-independent manner. Negatively regulates skeletal muscle-specific gene expression in endocrine cells of the pituitary by inhibiting the Notch signaling pathway. Represses target gene transcription by recruiting chromatin-modifying factors, such as HDAC1, HDAC2, HDAC3, KDM1A and RCOR1 histone deacetylases. Binds to its own promoter, suggesting autoregulation as a self-control feedback mechanism. Competes with histone H3 for the same binding site on the histone demethylase complex formed by KDM1A and RCOR1, and thereby inhibits demethylation of histone H3 at 'Lys-4'. Promotes the generation and expansion of neuronal basal progenitor cells in the developing neocortex. Involved in the differentiation of endocrine cells of the developing anterior pituitary gland, of the pancreas and intestine, and of sympatho-adrenal cells in the peripheral nervous system. Promotes cell cycle signaling arrest and inhibition of cellular proliferation. The chain is Insulinoma-associated protein 1 (INSM1) from Bos taurus (Bovine).